A 217-amino-acid polypeptide reads, in one-letter code: Probable transaldolase (217 aa).

Residue Lys-83 is the Schiff-base intermediate with substrate of the active site.

Belongs to the transaldolase family. Type 3B subfamily.

The protein resides in the cytoplasm. The catalysed reaction is D-sedoheptulose 7-phosphate + D-glyceraldehyde 3-phosphate = D-erythrose 4-phosphate + beta-D-fructose 6-phosphate. It participates in carbohydrate degradation; pentose phosphate pathway; D-glyceraldehyde 3-phosphate and beta-D-fructose 6-phosphate from D-ribose 5-phosphate and D-xylulose 5-phosphate (non-oxidative stage): step 2/3. Functionally, transaldolase is important for the balance of metabolites in the pentose-phosphate pathway. In Maricaulis maris (strain MCS10) (Caulobacter maris), this protein is Probable transaldolase.